The sequence spans 655 residues: Putative esterase (655 aa).

A helical transmembrane segment spans residues 9–29; that stretch reads VLSLTLIYISISIGFSVYFYV. 7 N-linked (GlcNAc...) asparagine; by host glycosylation sites follow: N71, N89, N101, N185, N386, N449, and N512. Catalysis depends on H515, which acts as the Charge relay system. 2 N-linked (GlcNAc...) asparagine; by host glycosylation sites follow: N527 and N597.

Belongs to the type-B carboxylesterase/lipase family.

It localises to the membrane. It catalyses the reaction a carboxylic ester + H2O = an alcohol + a carboxylate + H(+). This chain is Putative esterase, found in Noctuidae (owlet moths).